Consider the following 358-residue polypeptide: MPNPSSISAPYPLPEEIRNLLADVETFVADILRGENLSKKAKEKRDALVKKIKDVKSIYLQESQDKGDAEDGEEYDDPFAGPPDTISLASERYDKDDEAPSDGNQFPPIAAQDLPFVLKAGYLEKRRKDHSFLGFEWQKRWCALSKTVFYYYGSDKDKQQKGEFAIDGYNVRMNNTLRKDGKKDCCFEISAPDKRIYQFTAASPKDAEEWVQQLNFVLQDMGSDVIPEDDEERGELYDDVDHPLPSSSPTRSLPIDDEIYEELPEEEEDGALVKVEGQRKMSQDSVHHTTGDKSTNYANFYQGLWDCTGALSDELSFKRGDVIYILSKEYNRYGWWVGEMKGAIGLVPKAYVMEMYDI.

Residues Ser-5 and Ser-6 each carry the phosphoserine modification. The segment at 62–88 (ESQDKGDAEDGEEYDDPFAGPPDTISL) is disordered. Phosphotyrosine is present on Tyr-75. Phosphoserine occurs at positions 87 and 90. Residues 116-219 (FVLKAGYLEK…WVQQLNFVLQ (104 aa)) enclose the PH domain. Residues Tyr-151 and Tyr-197 each carry the phosphotyrosine modification. Ser-223 is subject to Phosphoserine. The interval 232 to 254 (ERGELYDDVDHPLPSSSPTRSLP) is disordered. The segment covering 243–253 (PLPSSSPTRSL) has biased composition (low complexity). The residue at position 260 (Tyr-260) is a Phosphotyrosine. A phosphoserine mark is found at Ser-282 and Ser-285. Residues 296 to 357 (NYANFYQGLW…PKAYVMEMYD (62 aa)) enclose the SH3 domain.

This sequence belongs to the SKAP family. In terms of assembly, interacts with FYB1, which is required for SKAP2 protein stability. Interacts with PTPNS1. Part of a complex consisting of SKAP2, FYB1 and PTPNS1. Part of a complex consisting of SKAP2, FYB1 and LILRB3. Interacts with LAT, GRB2, PTK2B and PRAM1. May interact with actin. May interact with FYN, HCK and LYN. Interacts with FASLG.

The protein localises to the cytoplasm. In terms of biological role, may be involved in B-cell and macrophage adhesion processes. In B-cells, may act by coupling the B-cell receptor (BCR) to integrin activation. May play a role in src signaling pathway. This Bos taurus (Bovine) protein is Src kinase-associated phosphoprotein 2 (SKAP2).